A 414-amino-acid polypeptide reads, in one-letter code: Zinc metalloproteinase-disintegrin-like batroxstatin-3 (414 aa).

Asn7 and Asn70 each carry an N-linked (GlcNAc...) asparagine glycan. One can recognise a Peptidase M12B domain in the interval 10-204; it reads KYIKLVIVAD…HTPQCILNEP (195 aa). 3 disulfide bridges follow: Cys121–Cys199, Cys161–Cys183, and Cys163–Cys168. His146 provides a ligand contact to Zn(2+). The active site involves Glu147. His150 and His156 together coordinate Zn(2+). Positions 212 to 298 constitute a Disintegrin domain; that stretch reads PEVCGNYLLE…HCPTDRFHRN (87 aa). Ca(2+) is bound by residues Val214, Asn217, Glu221, Glu224, and Asp227. Intrachain disulfides connect Cys215–Cys244, Cys226–Cys239, Cys228–Cys234, Cys238–Cys261, Cys252–Cys258, Cys257–Cys283, Cys270–Cys290, Cys277–Cys309, Cys302–Cys314, Cys321–Cys371, Cys336–Cys381, Cys349–Cys359, Cys366–Cys403, and Cys397–Cys408. Positions 276-278 match the D/ECD-tripeptide motif; it reads ECD. 4 residues coordinate Ca(2+): Asp278, Glu281, Asp293, and Arg294.

The protein belongs to the venom metalloproteinase (M12B) family. P-III subfamily. P-IIIa sub-subfamily. As to quaternary structure, monomer. Zn(2+) serves as cofactor. As to expression, expressed by the venom gland.

The protein localises to the secreted. Its function is as follows. Snake venom zinc metalloprotease that induces apoptosis in vascular endothelial cells (VEC), without degrading the extracellular matrix (it cannot cleave collagen) or inhibiting adhesion of VEC. Has also fibrinogenolytic and hemorrhagic activities. In Bothrops atrox (Barba amarilla), this protein is Zinc metalloproteinase-disintegrin-like batroxstatin-3.